A 425-amino-acid polypeptide reads, in one-letter code: Serine hydroxymethyltransferase (425 aa).

(6S)-5,6,7,8-tetrahydrofolate-binding positions include L120 and G124–L126. At K229 the chain carries N6-(pyridoxal phosphate)lysine. S353–F355 lines the (6S)-5,6,7,8-tetrahydrofolate pocket.

This sequence belongs to the SHMT family. Homodimer. It depends on pyridoxal 5'-phosphate as a cofactor.

The protein resides in the cytoplasm. It catalyses the reaction (6R)-5,10-methylene-5,6,7,8-tetrahydrofolate + glycine + H2O = (6S)-5,6,7,8-tetrahydrofolate + L-serine. Its pathway is one-carbon metabolism; tetrahydrofolate interconversion. The protein operates within amino-acid biosynthesis; glycine biosynthesis; glycine from L-serine: step 1/1. In terms of biological role, catalyzes the reversible interconversion of serine and glycine with tetrahydrofolate (THF) serving as the one-carbon carrier. This reaction serves as the major source of one-carbon groups required for the biosynthesis of purines, thymidylate, methionine, and other important biomolecules. Also exhibits THF-independent aldolase activity toward beta-hydroxyamino acids, producing glycine and aldehydes, via a retro-aldol mechanism. In Thermosynechococcus vestitus (strain NIES-2133 / IAM M-273 / BP-1), this protein is Serine hydroxymethyltransferase.